The sequence spans 68 residues: Pleurocidin (68 aa).

An N-terminal signal peptide occupies residues 1-22; that stretch reads MKFTATFLMMAIFVLMVEPGEC. Positions 48-68 are excised as a propeptide; that stretch reads GDKQELNKRAVDEDPNVIVFE.

The protein belongs to the pleurocidin family. Goblet cells.

It is found in the secreted. Its subcellular location is the membrane. In terms of biological role, antimicrobial peptide with potent activity against Gram-positive and Gram-negative bacteria. Activity against E.coli and B.subtilis. Weaker activity against L.mucor, s.marcescens and P.aeruginosa. May play a role in innate host defense. This chain is Pleurocidin (ple1), found in Pseudopleuronectes americanus (Winter flounder).